Here is a 220-residue protein sequence, read N- to C-terminus: Urease accessory protein UreF (220 aa).

Belongs to the UreF family. In terms of assembly, ureD, UreF and UreG form a complex that acts as a GTP-hydrolysis-dependent molecular chaperone, activating the urease apoprotein by helping to assemble the nickel containing metallocenter of UreC. The UreE protein probably delivers the nickel.

It is found in the cytoplasm. Its function is as follows. Required for maturation of urease via the functional incorporation of the urease nickel metallocenter. This chain is Urease accessory protein UreF, found in Bordetella bronchiseptica (strain ATCC BAA-588 / NCTC 13252 / RB50) (Alcaligenes bronchisepticus).